The chain runs to 85 residues: Ice-structuring protein 4 (85 aa).

The N-terminal stretch at 1-21 (MRITEANPDPDAKAVPAAAAP) is a signal peptide.

This sequence belongs to the type-I AFP family.

The protein localises to the secreted. Its function is as follows. Contributes to protect fish blood from freezing at subzero sea water temperatures. Lowers the blood freezing point. Binds to nascent ice crystals and prevents further growth. The protein is Ice-structuring protein 4 of Pseudopleuronectes americanus (Winter flounder).